The following is a 78-amino-acid chain: Acyl carrier protein (78 aa).

The region spanning 2–77 (QNIEKKIKKI…SIFDIIKKYV (76 aa)) is the Carrier domain. The residue at position 37 (Ser37) is an O-(pantetheine 4'-phosphoryl)serine.

It belongs to the acyl carrier protein (ACP) family. 4'-phosphopantetheine is transferred from CoA to a specific serine of apo-ACP by AcpS. This modification is essential for activity because fatty acids are bound in thioester linkage to the sulfhydryl of the prosthetic group.

The protein resides in the cytoplasm. Its pathway is lipid metabolism; fatty acid biosynthesis. Functionally, carrier of the growing fatty acid chain in fatty acid biosynthesis. The sequence is that of Acyl carrier protein from Buchnera aphidicola subsp. Baizongia pistaciae (strain Bp).